We begin with the raw amino-acid sequence, 100 residues long: Small ribosomal subunit protein uS14m (100 aa).

It belongs to the universal ribosomal protein uS14 family.

It localises to the mitochondrion. The chain is Small ribosomal subunit protein uS14m (RPS14) from Brassica napus (Rape).